The following is a 267-amino-acid chain: Flap endonuclease Xni (267 aa).

Asp115 is a Mg(2+) binding site. A 5'-3' exonuclease domain is found at 171 to 261 (VAPAQLVDFW…LGFNLREIRY (91 aa)). 3 residues coordinate K(+): Leu182, Val193, and Ile196. An interaction with DNA region spans residues 195–200 (GIGPKT).

This sequence belongs to the Xni family. The cofactor is Mg(2+). K(+) is required as a cofactor.

Has flap endonuclease activity. During DNA replication, flap endonucleases cleave the 5'-overhanging flap structure that is generated by displacement synthesis when DNA polymerase encounters the 5'-end of a downstream Okazaki fragment. This chain is Flap endonuclease Xni, found in Aeromonas hydrophila subsp. hydrophila (strain ATCC 7966 / DSM 30187 / BCRC 13018 / CCUG 14551 / JCM 1027 / KCTC 2358 / NCIMB 9240 / NCTC 8049).